The following is a 403-amino-acid chain: Phosphoglycerate kinase (403 aa).

Substrate contacts are provided by residues 21 to 23 (DFN), R36, 59 to 62 (HLGR), R119, and R159. ATP is bound by residues K214, G301, E332, and 359-362 (GGDS).

This sequence belongs to the phosphoglycerate kinase family. In terms of assembly, monomer.

The protein resides in the cytoplasm. The catalysed reaction is (2R)-3-phosphoglycerate + ATP = (2R)-3-phospho-glyceroyl phosphate + ADP. It participates in carbohydrate degradation; glycolysis; pyruvate from D-glyceraldehyde 3-phosphate: step 2/5. The polypeptide is Phosphoglycerate kinase (Lactobacillus acidophilus (strain ATCC 700396 / NCK56 / N2 / NCFM)).